We begin with the raw amino-acid sequence, 159 residues long: Ribosomal RNA large subunit methyltransferase H (159 aa).

S-adenosyl-L-methionine contacts are provided by residues Leu76, Gly108, and 127-132 (FGKLTL).

It belongs to the RNA methyltransferase RlmH family. As to quaternary structure, homodimer.

It localises to the cytoplasm. It carries out the reaction pseudouridine(1915) in 23S rRNA + S-adenosyl-L-methionine = N(3)-methylpseudouridine(1915) in 23S rRNA + S-adenosyl-L-homocysteine + H(+). Its function is as follows. Specifically methylates the pseudouridine at position 1915 (m3Psi1915) in 23S rRNA. This chain is Ribosomal RNA large subunit methyltransferase H, found in Streptococcus sanguinis (strain SK36).